We begin with the raw amino-acid sequence, 181 residues long: Large ribosomal subunit protein uL10 (181 aa).

Belongs to the universal ribosomal protein uL10 family. Part of the ribosomal stalk of the 50S ribosomal subunit. The N-terminus interacts with L11 and the large rRNA to form the base of the stalk. The C-terminus forms an elongated spine to which L12 dimers bind in a sequential fashion forming a multimeric L10(L12)X complex.

Its function is as follows. Forms part of the ribosomal stalk, playing a central role in the interaction of the ribosome with GTP-bound translation factors. This chain is Large ribosomal subunit protein uL10, found in Amoebophilus asiaticus (strain 5a2).